A 125-amino-acid polypeptide reads, in one-letter code: Cu-Zn superoxide dismutase-like protein OPG175 (125 aa).

Cysteine 52 and cysteine 102 form a disulfide bridge.

This sequence belongs to the Cu-Zn superoxide dismutase family.

The protein resides in the virion. The protein localises to the host cytoplasm. In terms of biological role, superoxide dismutase-like protein with no enzymatic activity. In Homo sapiens (Human), this protein is Cu-Zn superoxide dismutase-like protein OPG175 (OPG175).